A 456-amino-acid polypeptide reads, in one-letter code: Bacteriochlorophyllide d C-12(1)-methyltransferase (456 aa).

Residues 178–405 form the Radical SAM core domain; the sequence is HAKKYSQLIP…MFEPKKLGGE (228 aa). Residues cysteine 194, cysteine 198, and cysteine 201 each coordinate [4Fe-4S] cluster.

The protein belongs to the radical SAM superfamily. Requires [4Fe-4S] cluster as cofactor.

The protein resides in the cytoplasm. It catalyses the reaction 8-ethyl-12-methyl-3-vinylbacteriochlorophyllide d + S-adenosyl-L-methionine = 8,12-diethyl-3-vinylbacteriochlorophyllide d + S-adenosyl-L-homocysteine + H(+). Its pathway is porphyrin-containing compound metabolism; bacteriochlorophyll biosynthesis (light-independent). Functionally, involved in the biosynthesis of the major light-harvesting pigment bacteriochlorophyll c (BChlc), which confers a significant competitive advantage to green sulfur bacteria living at limiting red and near-infrared light intensities. BchR is a methyltransferase that adds a single methyl group to the methyl carbon at the C-12(1) position of 8-ethyl-12-methyl-3-vinylbacteriochlorophyllide d to yield 8,12-diethyl-3-vinylbacteriochlorophyllide d. In Chlorobaculum tepidum (strain ATCC 49652 / DSM 12025 / NBRC 103806 / TLS) (Chlorobium tepidum), this protein is Bacteriochlorophyllide d C-12(1)-methyltransferase.